The following is a 248-amino-acid chain: 1-(5-phosphoribosyl)-5-[(5-phosphoribosylamino)methylideneamino] imidazole-4-carboxamide isomerase (248 aa).

Aspartate 8 serves as the catalytic Proton acceptor. Residue aspartate 129 is the Proton donor of the active site.

Belongs to the HisA/HisF family.

The protein resides in the cytoplasm. The catalysed reaction is 1-(5-phospho-beta-D-ribosyl)-5-[(5-phospho-beta-D-ribosylamino)methylideneamino]imidazole-4-carboxamide = 5-[(5-phospho-1-deoxy-D-ribulos-1-ylimino)methylamino]-1-(5-phospho-beta-D-ribosyl)imidazole-4-carboxamide. It functions in the pathway amino-acid biosynthesis; L-histidine biosynthesis; L-histidine from 5-phospho-alpha-D-ribose 1-diphosphate: step 4/9. This is 1-(5-phosphoribosyl)-5-[(5-phosphoribosylamino)methylideneamino] imidazole-4-carboxamide isomerase from Rhizobium johnstonii (strain DSM 114642 / LMG 32736 / 3841) (Rhizobium leguminosarum bv. viciae).